A 408-amino-acid polypeptide reads, in one-letter code: Acetate kinase (408 aa).

Residue asparagine 10 coordinates Mg(2+). Lysine 17 is a binding site for ATP. Arginine 96 is a substrate binding site. The active-site Proton donor/acceptor is the aspartate 153. ATP contacts are provided by residues 213 to 217 (HLGNG) and 288 to 290 (DLR). Glutamate 393 provides a ligand contact to Mg(2+).

This sequence belongs to the acetokinase family. Homodimer. The cofactor is Mg(2+). Mn(2+) serves as cofactor.

Its subcellular location is the cytoplasm. It carries out the reaction acetate + ATP = acetyl phosphate + ADP. It functions in the pathway metabolic intermediate biosynthesis; acetyl-CoA biosynthesis; acetyl-CoA from acetate: step 1/2. Its function is as follows. Catalyzes the formation of acetyl phosphate from acetate and ATP. Can also catalyze the reverse reaction. The sequence is that of Acetate kinase from Borrelia duttonii (strain Ly).